Here is a 130-residue protein sequence, read N- to C-terminus: Small ribosomal subunit protein uS8 (130 aa).

This sequence belongs to the universal ribosomal protein uS8 family. As to quaternary structure, part of the 30S ribosomal subunit.

Its function is as follows. One of the primary rRNA binding proteins, it binds directly to 16S rRNA central domain where it helps coordinate assembly of the platform of the 30S subunit. This chain is Small ribosomal subunit protein uS8, found in Haloarcula marismortui (strain ATCC 43049 / DSM 3752 / JCM 8966 / VKM B-1809) (Halobacterium marismortui).